Here is a 387-residue protein sequence, read N- to C-terminus: MASSPLTANVQGTNASLRNRDEETADKQIQFNDQSFGGNDYAPKVRKPYTITKERERWTDEEHKKFVEALKLYGRAWRRIEEHVGSKTAVQIRSHAQKFFSKVAREATGGDGSSVEPIVIPPPRPKRKPAHPYPRKFGNEADQTSRSVSPSERDTQSPTSVLSTVGSEALCSLDSSSPNRSLSPVSSASPPAALTTTANAPEELETLKLELFPSERLLNRESSIKEPTKQSLKLFGKTVLVSDSGMSSSLTTSTYCKSPIQPLPRKLSSSKTLPIIRNSQEELLSCWIQVPLKQEDVENRCLDSGKAVQNEGSSTGSNTGSVDDTGHTEKTTEPETMLCQWEFKPSERSAFSELRRTNSESNSRGFGPYKKRKMVTEEEEHEIHLHL.

Polar residues-rich tracts occupy residues Met-1–Leu-17 and Lys-27–Gly-37. Residues Met-1–Lys-44 form a disordered region. The region spanning Thr-50 to Ala-104 is the HTH myb-type domain. Residues Trp-77–Phe-100 constitute a DNA-binding region (H-T-H motif). Disordered stretches follow at residues Arg-105–Ala-200, Lys-306–Pro-334, and Ala-350–Leu-387. Positions Arg-124–Pro-134 are enriched in basic residues. A compositionally biased stretch (polar residues) spans Ala-141–Gly-166. Composition is skewed to low complexity over residues Ser-172–Ala-200 and Gly-312–Asp-323. A compositionally biased stretch (basic and acidic residues) spans Asp-324–Glu-333.

Its subcellular location is the nucleus. Its function is as follows. Morning-phased transcription factor integrating the circadian clock and auxin pathways. Binds to the evening element (EE) of promoters. Does not act within the central clock, but regulates free auxin levels in a time-of-day specific manner. Positively regulates the expression of YUC8 during the day, but has no effect during the night. Negative regulator of freezing tolerance. The sequence is that of Protein REVEILLE 1 (RVE1) from Arabidopsis thaliana (Mouse-ear cress).